Here is a 46-residue protein sequence, read N- to C-terminus: Sperm protamine P1 (46 aa).

The protein belongs to the protamine P1 family. As to expression, testis.

It localises to the nucleus. It is found in the chromosome. Protamines substitute for histones in the chromatin of sperm during the haploid phase of spermatogenesis. They compact sperm DNA into a highly condensed, stable and inactive complex. This Hypsugo savii (Savi's pipistrelle) protein is Sperm protamine P1 (PRM1).